Consider the following 179-residue polypeptide: Caveolin-1 (179 aa).

At S2 the chain carries N-acetylserine. At S2 the chain carries Phosphoserine. The tract at residues 2 to 95 (SGGKYVDSEG…WKASFTTFTV (94 aa)) is required for homooligomerization. Topologically, residues 2–105 (SGGKYVDSEG…TKYWFYRLLS (104 aa)) are cytoplasmic. K5 is subject to N6-acetyllysine; alternate. A Glycyl lysine isopeptide (Lys-Gly) (interchain with G-Cter in ubiquitin); alternate cross-link involves residue K5. Y6 carries the post-translational modification Phosphotyrosine. S9 is subject to Phosphoserine. The residue at position 14 (Y14) is a Phosphotyrosine; by ABL1. Residue Y25 is modified to Phosphotyrosine. Residues K26 and K30 each participate in a glycyl lysine isopeptide (Lys-Gly) (interchain with G-Cter in ubiquitin) cross-link. Residue S37 is modified to Phosphoserine. Glycyl lysine isopeptide (Lys-Gly) (interchain with G-Cter in ubiquitin) cross-links involve residues K39, K48, and K58. Positions 83–95 (DGIWKASFTTFTV) are interaction with CAVIN3. Residues 106 to 126 (ALFGIPMALIWGIYFAILSFL) constitute an intramembrane region (helical). The Cytoplasmic segment spans residues 127 to 179 (HIWAVVPCIKSFLIEIQCISRVYSIYVHTFCDPLFEAIGKVFSNIRINMQKEI). An interacts with SPRY1, SPRY2, SPRY3 and SPRY4 region spans residues 132–143 (VPCIKSFLIEIQ). S-palmitoyl cysteine attachment occurs at residues C134, C144, and C157. The tract at residues 150–161 (SIYVHTFCDPLF) is interacts with SPRY1, SPRY2, and SPRY4. The interacts with SPRY1, SPRY2, SPRY3 and SPRY4 stretch occupies residues 168-179 (FSNIRINMQKEI).

The protein belongs to the caveolin family. As to quaternary structure, homooligomer. Interacts with GLIPR2. Interacts with NOSTRIN. Interacts with SNAP25 and STX1A. Interacts (via the N-terminus) with DPP4; the interaction is direct. Interacts with CTNNB1, CDH1 and JUP. Interacts with PACSIN2; this interaction induces membrane tubulation. Interacts with SLC7A9. Interacts with BMX and BTK. Interacts with TGFBR1. Interacts with CAVIN3 (via leucine-zipper domain) in a cholesterol-sensitive manner. Interacts with CAVIN1. Interacts with EHD2 in a cholesterol-dependent manner. Forms a ternary complex with UBXN6 and VCP; mediates CAV1 targeting to lysosomes for degradation. Interacts with ABCG1; this interaction regulates ABCG1-mediated cholesterol efflux. Interacts with NEU3; this interaction enhances NEU3 sialidase activity within caveola. Interacts (via C-terminus) with SPRY1, SPRY2 (via C-terminus), SPRY3, and SPRY4. Interacts with IGFBP5; this interaction allows trafficking of IGFBP5 from the plasma membrane to the nucleus. Phosphorylated at Tyr-14 by ABL1 in response to oxidative stress. In terms of processing, ubiquitinated. Undergo monoubiquitination and multi- and/or polyubiquitination. Monoubiquitination of N-terminal lysines promotes integration in a ternary complex with UBXN6 and VCP which promotes oligomeric CAV1 targeting to lysosomes for degradation. Ubiquitinated by ZNRF1; leading to degradation and modulation of the TLR4-mediated immune response.

The protein resides in the golgi apparatus membrane. Its subcellular location is the cell membrane. It is found in the membrane. It localises to the caveola. The protein localises to the membrane raft. May act as a scaffolding protein within caveolar membranes. Forms a stable heterooligomeric complex with CAV2 that targets to lipid rafts and drives caveolae formation. Mediates the recruitment of CAVIN proteins (CAVIN1/2/3/4) to the caveolae. Interacts directly with G-protein alpha subunits and can functionally regulate their activity. Involved in the costimulatory signal essential for T-cell receptor (TCR)-mediated T-cell activation. Its binding to DPP4 induces T-cell proliferation and NF-kappa-B activation in a T-cell receptor/CD3-dependent manner. Recruits CTNNB1 to caveolar membranes and may regulate CTNNB1-mediated signaling through the Wnt pathway. Negatively regulates TGFB1-mediated activation of SMAD2/3 by mediating the internalization of TGFBR1 from membrane rafts leading to its subsequent degradation. Binds 20(S)-hydroxycholesterol (20(S)-OHC). In Eulemur macaco macaco (Black lemur), this protein is Caveolin-1 (CAV1).